The chain runs to 299 residues: Protease HtpX homolog (299 aa).

A run of 2 helical transmembrane segments spans residues 15–35 (MFLT…VLWQ) and 37–57 (GVSY…QYYF). His140 is a binding site for Zn(2+). Glu141 is an active-site residue. His144 contributes to the Zn(2+) binding site. Helical transmembrane passes span 158 to 178 (FFAT…GAFG) and 187 to 207 (NNIM…YFLI). Glu215 contacts Zn(2+).

Belongs to the peptidase M48B family. The cofactor is Zn(2+).

It is found in the cell membrane. In Moorella thermoacetica (strain ATCC 39073 / JCM 9320), this protein is Protease HtpX homolog.